Here is a 445-residue protein sequence, read N- to C-terminus: MAQNMAPIFHFIAISLSCSFLFVLSSSQDSQSLHYPLPTSSSKPSLLVLPIQQDASTGLHWANIHKRTPLMQVPVLLDLNGKHLWVTCSYHYSSSTYQAPFCHSTQCSRANSHQCFTCTDSATTRPGCHNNTCALMTSNPVTQEAGFGELAQDVLAIHSTHGSKLGPMVKVLQFLFSCAPSFLAQKGLPNNIQGALGLGHAPISLPNQLFSHFGLRRQFTMCLSRYPTSNGAILFGDIYDPNNNYIDNSVEVLLDMVYTPLGISLQGEYLMQVSAIRVNKHIVVPTKNPSMLSSNHGDSRIGGVMITTTNPYTILHHSIYEVFTQVFANNIPKQAQVEAVGPFGLCFDSKKISGGIPNVEFVMDSPDDVWRISEENLMVQAQNGVSCLGFVDGGMHTRTEIALGAHQLEENLVVFDFAKSRVEFNSNPLKSHGKTCANLFDLNNA.

Positions 1 to 33 (MAQNMAPIFHFIAISLSCSFLFVLSSSQDSQSL) are cleaved as a signal peptide. In terms of domain architecture, Peptidase A1 spans 60–425 (HWANIHKRTP…DFAKSRVEFN (366 aa)). Intrachain disulfides connect Cys88–Cys178, Cys102–Cys115, Cys107–Cys133, Cys118–Cys128, and Cys346–Cys387. N-linked (GlcNAc...) asparagine glycosylation occurs at Asn130.

The protein belongs to the peptidase A1 family. As to quaternary structure, two-subunit monomeric unit made of alpha and beta subunits coupled by disulfide bonds (at pH 4.5 and under non-reducing conditions). Can also form oligomers including dimer, tetramer and cyclic hexamer (trimer of dimers) (at pH &gt; 5.5). Component of globulins complexes which accumulate in seeds. Interacts with flavonoids (e.g. apigenin glucosides) present in globulins complexes. In terms of processing, glycosylated on alpha chain.

It is found in the secreted. The protein resides in the extracellular space. Sulfur-rich seed storage protein that remains undegraded at germination. The polypeptide is Gamma conglutin 2 (Lupinus angustifolius (Narrow-leaved blue lupine)).